A 455-amino-acid polypeptide reads, in one-letter code: MASKCLKASFSSGSLKVPGGAGGGSARVSTIFSSSSCKLSGLSRGPRSFSACSVGLGKSSCRAASCLPALCLPSGGFATSYGMAGGWFGEGILTGNEKETMQFLNDRLASYLEKVRQLERENAELESRIRDWCEQQVPYLCPDYQSYFQTIEELQKKILCTKSENARLVVQIDNAKLAADDFRTKYETEVTMRQLVESDMNGLRRILDDLTLCKADLEAQVESLKEELLCLKKNHEEEVNSLRCQLGDRLNVEVDAAPPVDLNRVLNEMRCQYETLVENNRREAEDWFNTQTEELNQQVVSSSEQLQSYQAEIIELRRTVNALEIELQAQHSMRDALESTLAETEARYSSQLAQMQGLIGNVESQLAEIRCDLERQNQEYQVLLDVRARLECEISTYRGLLDSEDCKLPCNPCAPDHSPSKSCLPCLPAASCGPGTAHTTCSPRPICVSCPGSRF.

Residues 1–97 form a head region; the sequence is MASKCLKASF…FGEGILTGNE (97 aa). Positions 97–408 constitute an IF rod domain; it reads EKETMQFLND…GLLDSEDCKL (312 aa). Residues 98-132 are coil 1A; the sequence is KETMQFLNDRLASYLEKVRQLERENAELESRIRDW. The interval 133–143 is linker 1; the sequence is CEQQVPYLCPD. The segment at 144–244 is coil 1B; sequence YQSYFQTIEE…HEEEVNSLRC (101 aa). The linker 12 stretch occupies residues 245-260; it reads QLGDRLNVEVDAAPPV. Residues 261-404 are coil 2; that stretch reads DLNRVLNEMR…STYRGLLDSE (144 aa). Positions 405 to 455 are tail; the sequence is DCKLPCNPCAPDHSPSKSCLPCLPAASCGPGTAHTTCSPRPICVSCPGSRF.

Belongs to the intermediate filament family.

This is Keratin, type I cuticular Ha5 from Ovis aries (Sheep).